The primary structure comprises 429 residues: Probable M18 family aminopeptidase 2 (429 aa).

Zn(2+)-binding residues include His-82, His-156, and His-401.

It belongs to the peptidase M18 family. Requires Zn(2+) as cofactor.

The polypeptide is Probable M18 family aminopeptidase 2 (Ectopseudomonas mendocina (strain ymp) (Pseudomonas mendocina)).